We begin with the raw amino-acid sequence, 286 residues long: Bifunctional protein FolD (286 aa).

Residues 164 to 166 (GTS) and I230 each bind NADP(+).

The protein belongs to the tetrahydrofolate dehydrogenase/cyclohydrolase family. In terms of assembly, homodimer.

It catalyses the reaction (6R)-5,10-methylene-5,6,7,8-tetrahydrofolate + NADP(+) = (6R)-5,10-methenyltetrahydrofolate + NADPH. The catalysed reaction is (6R)-5,10-methenyltetrahydrofolate + H2O = (6R)-10-formyltetrahydrofolate + H(+). It participates in one-carbon metabolism; tetrahydrofolate interconversion. Catalyzes the oxidation of 5,10-methylenetetrahydrofolate to 5,10-methenyltetrahydrofolate and then the hydrolysis of 5,10-methenyltetrahydrofolate to 10-formyltetrahydrofolate. The sequence is that of Bifunctional protein FolD from Mesoplasma florum (strain ATCC 33453 / NBRC 100688 / NCTC 11704 / L1) (Acholeplasma florum).